The primary structure comprises 1035 residues: Ephrin type-A receptor 6 (1035 aa).

The N-terminal stretch at 1–22 is a signal peptide; it reads MGGCEVREFLLQFGFFLPLLTA. The Extracellular portion of the chain corresponds to 23–549; sequence WTGDCSHVSN…MAAEQGQILV (527 aa). One can recognise an Eph LBD domain in the interval 33-211; sequence QVVLLDTTTV…FYKKCPFTVR (179 aa). 2 Fibronectin type-III domains span residues 330-440 and 441-536; these read PPSA…TDHD and APSL…TGDE. Asparagine 342, asparagine 396, and asparagine 409 each carry an N-linked (GlcNAc...) asparagine glycan. A helical membrane pass occupies residues 550–570; it reads IATAAVGGFTLLVILTLFFLI. Residues 571–1035 lie on the Cytoplasmic side of the membrane; sequence TGRCQWYIKA…MHIQEKGFHV (465 aa). Phosphotyrosine; by autocatalysis is present on residues tyrosine 605 and tyrosine 611. Residues 630–943 enclose the Protein kinase domain; that stretch reads IRIERVIGAG…RNPSALHTLV (314 aa). Residues 636-644 and lysine 662 contribute to the ATP site; that span reads IGAGEFGEV. The active-site Proton acceptor is aspartate 797. Tyrosine 830 and tyrosine 977 each carry phosphotyrosine; by autocatalysis. The SAM domain occupies 960 to 1024; sequence PLFVTVGDWL…VSSIQTLRLH (65 aa). The PDZ-binding motif lies at 1033–1035; the sequence is FHV.

It belongs to the protein kinase superfamily. Tyr protein kinase family. Ephrin receptor subfamily. Heterotetramer upon binding of the ligand. The heterotetramer is composed of an ephrin dimer and a receptor dimer. Oligomerization is probably required to induce biological responses. Interacts (via SAM domain) with ANKS1A (via SAM domain).

It localises to the membrane. It catalyses the reaction L-tyrosyl-[protein] + ATP = O-phospho-L-tyrosyl-[protein] + ADP + H(+). In terms of biological role, receptor tyrosine kinase which binds promiscuously GPI-anchored ephrin-A family ligands residing on adjacent cells, leading to contact-dependent bidirectional signaling into neighboring cells. The signaling pathway downstream of the receptor is referred to as forward signaling while the signaling pathway downstream of the ephrin ligand is referred to as reverse signaling. This is Ephrin type-A receptor 6 (Epha6) from Mus musculus (Mouse).